Reading from the N-terminus, the 443-residue chain is Trigger factor (443 aa).

The region spanning 164-249 is the PPIase FKBP-type domain; that stretch reads GDVLCVDFVG…AKSLKKAVDP (86 aa).

It belongs to the FKBP-type PPIase family. Tig subfamily.

It is found in the cytoplasm. The catalysed reaction is [protein]-peptidylproline (omega=180) = [protein]-peptidylproline (omega=0). In terms of biological role, involved in protein export. Acts as a chaperone by maintaining the newly synthesized protein in an open conformation. Functions as a peptidyl-prolyl cis-trans isomerase. The sequence is that of Trigger factor from Gluconobacter oxydans (strain 621H) (Gluconobacter suboxydans).